Consider the following 88-residue polypeptide: Small ribosomal subunit protein bS20 (88 aa).

Belongs to the bacterial ribosomal protein bS20 family.

Its function is as follows. Binds directly to 16S ribosomal RNA. The protein is Small ribosomal subunit protein bS20 of Methylocella silvestris (strain DSM 15510 / CIP 108128 / LMG 27833 / NCIMB 13906 / BL2).